The following is a 142-amino-acid chain: Phosphoribosyl-AMP cyclohydrolase (142 aa).

Asp-92 lines the Mg(2+) pocket. Cys-93 is a Zn(2+) binding site. Asp-94 and Asp-96 together coordinate Mg(2+). Residues Cys-109 and Cys-116 each coordinate Zn(2+).

It belongs to the PRA-CH family. Homodimer. The cofactor is Mg(2+). It depends on Zn(2+) as a cofactor.

The protein localises to the cytoplasm. It catalyses the reaction 1-(5-phospho-beta-D-ribosyl)-5'-AMP + H2O = 1-(5-phospho-beta-D-ribosyl)-5-[(5-phospho-beta-D-ribosylamino)methylideneamino]imidazole-4-carboxamide. It participates in amino-acid biosynthesis; L-histidine biosynthesis; L-histidine from 5-phospho-alpha-D-ribose 1-diphosphate: step 3/9. Catalyzes the hydrolysis of the adenine ring of phosphoribosyl-AMP. This chain is Phosphoribosyl-AMP cyclohydrolase, found in Halorhodospira halophila (strain DSM 244 / SL1) (Ectothiorhodospira halophila (strain DSM 244 / SL1)).